The primary structure comprises 306 residues: GTPase Era (306 aa).

Residues Y13–E181 enclose the Era-type G domain. The tract at residues G21–S28 is G1. G21–S28 is a GTP binding site. Residues Q47–H51 are G2. The segment at D68–G71 is G3. GTP-binding positions include D68–L72 and N130–D133. Residues N130 to D133 form a G4 region. Positions I160–A162 are G5. In terms of domain architecture, KH type-2 spans T212–S289.

It belongs to the TRAFAC class TrmE-Era-EngA-EngB-Septin-like GTPase superfamily. Era GTPase family. Monomer.

It is found in the cytoplasm. The protein resides in the cell inner membrane. Its function is as follows. An essential GTPase that binds both GDP and GTP, with rapid nucleotide exchange. Plays a role in 16S rRNA processing and 30S ribosomal subunit biogenesis and possibly also in cell cycle regulation and energy metabolism. The polypeptide is GTPase Era (Pasteurella multocida (strain Pm70)).